We begin with the raw amino-acid sequence, 145 residues long: MAKEISKVVKLQVKGGAANPSPPVGPALGAAGVNIMEFCKQFNARTQDKPGKICPVQITVYKDKSFDFVVKTPPAAVQLMEAAKLKSGSGEPNRKKVASVTWEQIRTIAEDKMPDLNAFTIEKAMSMVAGTARSMGITVSGDAPF.

This sequence belongs to the universal ribosomal protein uL11 family. Part of the ribosomal stalk of the 50S ribosomal subunit. Interacts with L10 and the large rRNA to form the base of the stalk. L10 forms an elongated spine to which L12 dimers bind in a sequential fashion forming a multimeric L10(L12)X complex. Post-translationally, one or more lysine residues are methylated.

In terms of biological role, forms part of the ribosomal stalk which helps the ribosome interact with GTP-bound translation factors. The sequence is that of Large ribosomal subunit protein uL11 from Flavobacterium johnsoniae (strain ATCC 17061 / DSM 2064 / JCM 8514 / BCRC 14874 / CCUG 350202 / NBRC 14942 / NCIMB 11054 / UW101) (Cytophaga johnsonae).